Consider the following 301-residue polypeptide: N-acetylmuramic acid 6-phosphate etherase (301 aa).

The region spanning 57–220 (IAETFMKNGR…TTGAMIKTGK (164 aa)) is the SIS domain. The Proton donor role is filled by glutamate 85. The active site involves glutamate 116.

This sequence belongs to the GCKR-like family. MurNAc-6-P etherase subfamily. As to quaternary structure, homodimer.

It carries out the reaction N-acetyl-D-muramate 6-phosphate + H2O = N-acetyl-D-glucosamine 6-phosphate + (R)-lactate. The protein operates within amino-sugar metabolism; 1,6-anhydro-N-acetylmuramate degradation. It functions in the pathway amino-sugar metabolism; N-acetylmuramate degradation. It participates in cell wall biogenesis; peptidoglycan recycling. In terms of biological role, specifically catalyzes the cleavage of the D-lactyl ether substituent of MurNAc 6-phosphate, producing GlcNAc 6-phosphate and D-lactate. Together with AnmK, is also required for the utilization of anhydro-N-acetylmuramic acid (anhMurNAc) either imported from the medium or derived from its own cell wall murein, and thus plays a role in cell wall recycling. This Pasteurella multocida (strain Pm70) protein is N-acetylmuramic acid 6-phosphate etherase.